A 514-amino-acid polypeptide reads, in one-letter code: Histidine ammonia-lyase (514 aa).

Residues 146–148 constitute a cross-link (5-imidazolinone (Ala-Gly)); sequence ASG. At serine 147 the chain carries 2,3-didehydroalanine (Ser).

This sequence belongs to the PAL/histidase family. In terms of processing, contains an active site 4-methylidene-imidazol-5-one (MIO), which is formed autocatalytically by cyclization and dehydration of residues Ala-Ser-Gly.

It localises to the cytoplasm. It carries out the reaction L-histidine = trans-urocanate + NH4(+). It functions in the pathway amino-acid degradation; L-histidine degradation into L-glutamate; N-formimidoyl-L-glutamate from L-histidine: step 1/3. This is Histidine ammonia-lyase from Clostridium tetani (strain Massachusetts / E88).